Here is a 323-residue protein sequence, read N- to C-terminus: Cyclin-H (323 aa).

S5 bears the Phosphoserine; by CDK8 mark. At S132 the chain carries Phosphoserine. The disordered stretch occupies residues 299–323 (DDDYVPKKSKHEEEEWTDDDLVESL). Over residues 302–311 (YVPKKSKHEE) the composition is skewed to basic and acidic residues. Positions 312 to 323 (EEWTDDDLVESL) are enriched in acidic residues. T315 bears the Phosphothreonine mark. S322 bears the Phosphoserine mark.

Belongs to the cyclin family. Cyclin C subfamily. As to quaternary structure, associates primarily with CDK7 and MAT1 to form the CAK complex. CAK can further associate with the core-TFIIH to form the TFIIH basal transcription factor.

It is found in the nucleus. Regulates CDK7, the catalytic subunit of the CDK-activating kinase (CAK) enzymatic complex. CAK activates the cyclin-associated kinases CDK1, CDK2, CDK4 and CDK6 by threonine phosphorylation. CAK complexed to the core-TFIIH basal transcription factor activates RNA polymerase II by serine phosphorylation of the repetitive C-terminal domain (CTD) of its large subunit (POLR2A), allowing its escape from the promoter and elongation of the transcripts. Involved in cell cycle control and in RNA transcription by RNA polymerase II. Its expression and activity are constant throughout the cell cycle. This chain is Cyclin-H (CCNH), found in Macaca fascicularis (Crab-eating macaque).